The chain runs to 346 residues: Biotin synthase (346 aa).

In terms of domain architecture, Radical SAM core spans 38-256 (QQVQVSTLLS…IAVARIMMPT (219 aa)). The [4Fe-4S] cluster site is built by Cys53, Cys57, and Cys60. Residues Cys97, Cys128, Cys188, and Arg260 each coordinate [2Fe-2S] cluster.

It belongs to the radical SAM superfamily. Biotin synthase family. In terms of assembly, homodimer. The cofactor is [4Fe-4S] cluster. It depends on [2Fe-2S] cluster as a cofactor.

The catalysed reaction is (4R,5S)-dethiobiotin + (sulfur carrier)-SH + 2 reduced [2Fe-2S]-[ferredoxin] + 2 S-adenosyl-L-methionine = (sulfur carrier)-H + biotin + 2 5'-deoxyadenosine + 2 L-methionine + 2 oxidized [2Fe-2S]-[ferredoxin]. Its pathway is cofactor biosynthesis; biotin biosynthesis; biotin from 7,8-diaminononanoate: step 2/2. Functionally, catalyzes the conversion of dethiobiotin (DTB) to biotin by the insertion of a sulfur atom into dethiobiotin via a radical-based mechanism. This chain is Biotin synthase, found in Citrobacter koseri (strain ATCC BAA-895 / CDC 4225-83 / SGSC4696).